We begin with the raw amino-acid sequence, 361 residues long: Putative agmatine deiminase (361 aa).

Residue Cys-354 is the Amidino-cysteine intermediate of the active site.

The protein belongs to the agmatine deiminase family.

The catalysed reaction is agmatine + H2O = N-carbamoylputrescine + NH4(+). The chain is Putative agmatine deiminase from Streptococcus pneumoniae (strain P1031).